The sequence spans 698 residues: Probable metal-nicotianamine transporter YSL17 (698 aa).

The disordered stretch occupies residues 1 to 36 (MAEEARGGQRVVVDDDREDASSVASSTERAFEGEPL). 14 helical membrane passes run 43–63 (VTAR…VVAM), 67–87 (LTSG…FFLA), 114–134 (IAVV…YILG), 157–177 (IGRV…IIVP), 216–236 (VVTL…QWFF), 277–297 (MITA…WPYI), 322–342 (VFVG…SALV), 395–415 (WVAV…VPLL), 424–444 (VAAA…GVGV), 463–483 (SWVG…GIIV), 511–531 (VGQV…FWVF), 567–587 (LPDH…ALSA), 607–627 (IGVA…AVGC), and 644–664 (LLLP…SLAS).

The protein belongs to the YSL (TC 2.A.67.2) family. As to expression, expressed at low levels in roots.

The protein resides in the membrane. In terms of biological role, may be involved in the transport of nicotianamine-chelated metals. The protein is Probable metal-nicotianamine transporter YSL17 (YSL17) of Oryza sativa subsp. japonica (Rice).